The sequence spans 1187 residues: Tyrosine-protein phosphatase non-receptor type 14 (1187 aa).

Positions 21–306 (FVTRIRLLDS…TRHKFYKQNK (286 aa)) constitute an FERM domain. Phosphoserine is present on residues serine 314, serine 461, and serine 486. Polar residues predominate over residues 510-524 (LVSPSDQRNPKNNVV). The disordered stretch occupies residues 510–531 (LVSPSDQRNPKNNVVPSKPGAS). A phosphoserine mark is found at serine 591, serine 593, serine 594, and serine 642. 2 disordered regions span residues 671-690 (LREQ…PQLP) and 787-824 (KAIS…KKEP). Basic and acidic residues predominate over residues 815–824 (SVKERVKKEP). Serine 831 carries the phosphoserine modification. The region spanning 909–1180 (VFTEYEQIPK…KFVYQVLIQF (272 aa)) is the Tyrosine-protein phosphatase domain. Substrate contacts are provided by residues aspartate 1079, 1121-1127 (CSAGVGR), and glutamine 1165. The active-site Phosphocysteine intermediate is cysteine 1121.

It belongs to the protein-tyrosine phosphatase family. Non-receptor class subfamily. As to quaternary structure, interacts with FLT4; the interaction is enhanced by stimulation with VEGFC. Interacts (via PPxY motifs) with YAP1 (via WW domains); this interaction leads to the cytoplasmic sequestration of YAP1 and inhibits its transcriptional co-activator activity. Post-translationally, ubiquitinated by the ECS (Elongin BC-CUL2/5-SOCS-box protein)/LRR1 E3 ligase complex and subsequently targeted to proteasomal degradation. Ubiquitous.

It localises to the cytoplasm. The protein localises to the cytoskeleton. Its subcellular location is the nucleus. The enzyme catalyses O-phospho-L-tyrosyl-[protein] + H2O = L-tyrosyl-[protein] + phosphate. Functionally, protein tyrosine phosphatase which may play a role in the regulation of lymphangiogenesis, cell-cell adhesion, cell-matrix adhesion, cell migration, cell growth and also regulates TGF-beta gene expression, thereby modulating epithelial-mesenchymal transition. Mediates beta-catenin dephosphorylation at adhesion junctions. Acts as a negative regulator of the oncogenic property of YAP, a downstream target of the hippo pathway, in a cell density-dependent manner. May function as a tumor suppressor. This chain is Tyrosine-protein phosphatase non-receptor type 14 (PTPN14), found in Homo sapiens (Human).